The primary structure comprises 83 residues: Toxin CjTL8 (83 aa).

The N-terminal stretch at 1-20 (MSSAIKILALLMVLVALAQA) is a signal peptide. Positions 21–44 (KPRKDYRAYPDFDDKSVILEDDKR) are excised as a propeptide. F81 is modified (phenylalanine amide).

Post-translationally, contains 3 disulfide bonds.

The protein resides in the secreted. It is found in the nematocyst. In vivo, induces immediate paralysis on shrimps (C.multidentata), followed by death when high doses are injected. No activity is observed when injected into fly larvae (M.domestica). The chain is Toxin CjTL8 from Epiactis japonica (Sea anemone).